The chain runs to 239 residues: Beta-glucanase (239 aa).

Residues 1 to 25 form the signal peptide; sequence MKRVLLILVTGLFMSLCGITSSVSA. One can recognise a GH16 domain in the interval 26-239; the sequence is QTGGSFFEPF…HYDWMRYRKK (214 aa). A disulfide bridge connects residues cysteine 57 and cysteine 86. Catalysis depends on glutamate 134, which acts as the Nucleophile.

The protein belongs to the glycosyl hydrolase 16 family.

It carries out the reaction Hydrolysis of (1-&gt;4)-beta-D-glucosidic linkages in beta-D-glucans containing (1-&gt;3)- and (1-&gt;4)-bonds.. In Bacillus amyloliquefaciens (Bacillus velezensis), this protein is Beta-glucanase (bglA).